Consider the following 406-residue polypeptide: Argininosuccinate synthase (406 aa).

Residues 13–21 (AYSGGLDTS) and alanine 40 contribute to the ATP site. Tyrosine 91 and serine 96 together coordinate L-citrulline. An ATP-binding site is contributed by glycine 121. Positions 123, 127, and 128 each coordinate L-aspartate. Asparagine 127 provides a ligand contact to L-citrulline. Positions 131, 180, 189, 265, and 277 each coordinate L-citrulline.

The protein belongs to the argininosuccinate synthase family. Type 1 subfamily. As to quaternary structure, homotetramer.

The protein resides in the cytoplasm. It catalyses the reaction L-citrulline + L-aspartate + ATP = 2-(N(omega)-L-arginino)succinate + AMP + diphosphate + H(+). Its pathway is amino-acid biosynthesis; L-arginine biosynthesis; L-arginine from L-ornithine and carbamoyl phosphate: step 2/3. This chain is Argininosuccinate synthase, found in Syntrophotalea carbinolica (strain DSM 2380 / NBRC 103641 / GraBd1) (Pelobacter carbinolicus).